Here is a 125-residue protein sequence, read N- to C-terminus: MNSLEQAEDLKAFERRLTEYVSCLQPATGRWRMILIVVSVCTATGAWNWLIDPDTQKVSFFSSLWNHPFFTISCVTLIGLFFAGIHKRVVAPSIIAARCRTVLAEYNMSCDDTGKLILKPRPHIQ.

Transmembrane regions (helical) follow at residues methionine 33–proline 53 and tryptophan 65–isoleucine 85.

It belongs to the CNEP1R1 family.

It localises to the nucleus membrane. It is found in the cytoplasm. May form with the serine/threonine protein phosphatase ctdnep1 an active complex dephosphorylating and activating lipins. Lipins are phosphatidate phosphatases that catalyze the conversion of phosphatidic acid to diacylglycerol and control the metabolism of fatty acids at different levels. May indirectly modulate the lipid composition of nuclear and/or endoplasmic reticulum membranes and be required for proper nuclear membrane morphology and/or dynamics. May also indirectly regulate the production of lipid droplets and triacylglycerol. This is Nuclear envelope phosphatase-regulatory subunit 1 (cnep1r1) from Danio rerio (Zebrafish).